We begin with the raw amino-acid sequence, 287 residues long: Ret finger protein-like 4A (287 aa).

Residues Cys11–Ser53 form an RING-type; degenerate zinc finger. Residues Glu78–Ser276 enclose the B30.2/SPRY domain.

In terms of assembly, interacts with PSMB1, UBE2A and CCNB1.

The protein resides in the cytoplasm. It localises to the nucleus. The polypeptide is Ret finger protein-like 4A (RFPL4A) (Homo sapiens (Human)).